We begin with the raw amino-acid sequence, 299 residues long: MVGKARSSNFTLSEKLDLLKLVKPYVKILEEHTNKHSVIVEKNRCWDIIAVNYNAIGVDRPPRTAQGLRTLYKRLKEYAKQELLQQKETQSDFKSNISEPTKKVMEMIPQISSFCLVRDRNHIQSANLDEEAQAGTSSLQVMLDHHPVAITVEVKQEEDIKPPPPLVLNSQQSDTLEQREEHELVHVMERSLSPSLSSVDMRMTSSPSSIPRRDDFFRHESGEHFRSLLGYDPQILQMLKEEHQIILENQKNFGLYVQEKRDGLKRRQQLEEELLRAKIEVEKLKAIRLRHDLPEYNSL.

Lys-94 is covalently cross-linked (Glycyl lysine isopeptide (Lys-Gly) (interchain with G-Cter in SUMO2)).

In terms of assembly, interacts with APBA1 (via PDZ 1 and 2 domains). In terms of tissue distribution, expressed in multiple tissues including brain.

The protein resides in the nucleus. Transcriptional repressor that down-regulates the expression of the fibrinogen gamma chain. Represses transcription of GSK3B gene promoter via its interaction with APBA1. The chain is Fibrinogen silencer-binding protein (FSBP) from Homo sapiens (Human).